The chain runs to 964 residues: Lon protease homolog, mitochondrial (964 aa).

The 212-residue stretch at 89–300 (VIALPLPHRP…LTLELVKKEM (212 aa)) folds into the Lon N-terminal domain. 455 to 462 (GPPGVGKT) is an ATP binding site. Residues 663-740 (GVSNEPDHES…TSKGNKGTDG (78 aa)) are disordered. Residues 673–687 (VSASVTEESGNGDNT) show a composition bias toward polar residues. Basic and acidic residues predominate over residues 688-698 (TTKDEILKDPA). Positions 703 to 712 (SVTNNVTNPA) are enriched in polar residues. Residues 773 to 957 (HTPVGVVMGL…SEIYDLAFQS (185 aa)) form the Lon proteolytic domain. Catalysis depends on residues Ser863 and Lys906.

This sequence belongs to the peptidase S16 family. As to quaternary structure, homoheptamer. Organized in a ring with a central cavity.

The protein localises to the mitochondrion matrix. The catalysed reaction is Hydrolysis of proteins in presence of ATP.. Its function is as follows. ATP-dependent serine protease that mediates the selective degradation of misfolded, unassembled or oxidatively damaged polypeptides as well as certain short-lived regulatory proteins in the mitochondrial matrix. May also have a chaperone function in the assembly of inner membrane protein complexes. Participates in the regulation of mitochondrial gene expression and in the maintenance of the integrity of the mitochondrial genome. Binds to mitochondrial DNA in a site-specific manner. In Zea mays (Maize), this protein is Lon protease homolog, mitochondrial (LON2).